The sequence spans 729 residues: Replication restart protein PriA (729 aa).

The region spanning 209–376 (QTALGRFRSF…QSGAYRLLQL (168 aa)) is the Helicase ATP-binding domain. 222 to 229 (GITGSGKT) lines the ATP pocket. The short motif at 319–322 (DEEH) is the DEAH box element. Zn(2+) contacts are provided by Cys-436, Cys-439, Cys-445, Cys-448, Cys-463, Cys-466, Cys-476, and Cys-479. Residues 471-623 (PIPFKCPDCG…YAVFAENELN (153 aa)) enclose the Helicase C-terminal domain.

The protein belongs to the helicase family. PriA subfamily. As to quaternary structure, interacts with PriB with high affinity in the absence of DNA. Component of the replication restart primosome. Requires Zn(2+) as cofactor.

The catalysed reaction is Couples ATP hydrolysis with the unwinding of duplex DNA by translocating in the 3'-5' direction.. It catalyses the reaction ATP + H2O = ADP + phosphate + H(+). Helicase and ATPase activities on forked DNA are stimulated by PriB; E.coli PriB does not stimulate this helicase. PriA:PriB complex-catalyzed duplex DNA winding is inhibited by CGS 15943 (CHEBI:131351). CGS 15943 decreases ATP hydrolysis and decreases PriA's affinity for DNA. Its function is as follows. Initiates the restart of stalled replication forks, which reloads the replicative helicase on sites other than the origin of replication. Recognizes and binds to abandoned replication forks and remodels them to uncover a helicase loading site. Promotes assembly of the primosome at these replication forks. Functionally, DNA helicase with greatest unwinding activity on forked DNA substrates with relatively short duplex lagging strand arms. A DNA-dependent ATPase. Required for DNA transformation and DNA repair. Binds single-stranded (ss)DNA and replication fork-like DNA but not double-stranded (ds)DNA. In Neisseria gonorrhoeae (strain ATCC 700825 / FA 1090), this protein is Replication restart protein PriA.